We begin with the raw amino-acid sequence, 907 residues long: Potassium channel AKT3 (907 aa).

Residues 1–75 (MPTTKCAVPL…YDRRYELWNN (75 aa)) are Cytoplasmic-facing. A helical transmembrane segment spans residues 76-96 (YLILLVVYSAWVTPFEFGFVP). At 97 to 102 (EPAGAL) the chain is on the extracellular side. A helical transmembrane segment spans residues 103–123 (AAADNAVNAFFAVDIVLTFFV). Topologically, residues 124-146 (AYTDPKTFLLQDDPRKIALRYIT) are cytoplasmic. A helical transmembrane segment spans residues 147-167 (TWFVLDVVATIPTELARRILP). The Extracellular segment spans residues 168-174 (PDLRSYG). A helical; Voltage-sensor membrane pass occupies residues 175–195 (FFGILRLWRLHRVGILFARLE). Residues 196 to 209 (KDRKFSYFWVRCVK) lie on the Cytoplasmic side of the membrane. A helical transmembrane segment spans residues 210-230 (LVCVTLFAVHCSACFYYLLAD). The Extracellular segment spans residues 231-257 (RYPDPTNTWISAYMPNFHKASIWSRYV). Residues 258-277 (ASMYWSITTLSTVGYGDMHA) constitute an intramembrane region (pore-forming). The Extracellular portion of the chain corresponds to 278–288 (ENTGEMVFTTT). A helical transmembrane segment spans residues 289-309 (YMLFNLGLTAYIIGNMTNLVV). Residues 310 to 907 (HGTSRTRKFR…VPPENRSRNQ (598 aa)) are Cytoplasmic-facing. Residue 388–512 (LFEGVSNDLI…TIVMNNLIQY (125 aa)) coordinates a nucleoside 3',5'-cyclic phosphate. ANK repeat units follow at residues 539–568 (DFPI…DPNE), 572–601 (YGRT…DSNS), 605–634 (EGRV…DLSG), 636–665 (DAAP…DVSG), and 670–699 (DGTT…DADA). Disordered regions lie at residues 726–779 (ATRH…TPQR) and 801–824 (GGYR…SSPP). Low complexity predominate over residues 754–776 (SSPSSSSRRGRTSSTSAASARST). Positions 803–812 (YRGGGGGGGA) are enriched in gly residues. The region spanning 827–907 (RVAISCPESR…VPPENRSRNQ (81 aa)) is the KHA domain.

It belongs to the potassium channel family. Plant (TC 1.A.1.4) subfamily.

Its subcellular location is the membrane. In terms of biological role, probable inward-rectifying potassium channel. Assuming opened or closed conformations in response to the voltage difference across the membrane, the channel is activated by hyperpolarization. This Oryza sativa subsp. japonica (Rice) protein is Potassium channel AKT3.